A 191-amino-acid chain; its full sequence is Peptidyl-tRNA hydrolase (191 aa).

Tyr16 is a tRNA binding site. The Proton acceptor role is filled by His21. 3 residues coordinate tRNA: Phe66, Asn68, and Asn114.

This sequence belongs to the PTH family. Monomer.

It localises to the cytoplasm. The catalysed reaction is an N-acyl-L-alpha-aminoacyl-tRNA + H2O = an N-acyl-L-amino acid + a tRNA + H(+). Hydrolyzes ribosome-free peptidyl-tRNAs (with 1 or more amino acids incorporated), which drop off the ribosome during protein synthesis, or as a result of ribosome stalling. Functionally, catalyzes the release of premature peptidyl moieties from peptidyl-tRNA molecules trapped in stalled 50S ribosomal subunits, and thus maintains levels of free tRNAs and 50S ribosomes. The polypeptide is Peptidyl-tRNA hydrolase (Geotalea uraniireducens (strain Rf4) (Geobacter uraniireducens)).